Reading from the N-terminus, the 349-residue chain is Succinylglutamate desuccinylase (349 aa).

Positions 70, 73, and 166 each coordinate Zn(2+). The active site involves glutamate 229.

It belongs to the AspA/AstE family. Succinylglutamate desuccinylase subfamily. The cofactor is Zn(2+).

The enzyme catalyses N-succinyl-L-glutamate + H2O = L-glutamate + succinate. It functions in the pathway amino-acid degradation; L-arginine degradation via AST pathway; L-glutamate and succinate from L-arginine: step 5/5. In terms of biological role, transforms N(2)-succinylglutamate into succinate and glutamate. In Burkholderia mallei (strain ATCC 23344), this protein is Succinylglutamate desuccinylase.